The following is a 176-amino-acid chain: Corrinoid adenosyltransferase (176 aa).

Residues threonine 6–threonine 14, lysine 24, arginine 131–isoleucine 136, and asparagine 155 each bind ATP.

The protein belongs to the Cob(I)alamin adenosyltransferase family.

The protein localises to the cytoplasm. The enzyme catalyses 2 cob(II)yrinate a,c diamide + reduced [electron-transfer flavoprotein] + 2 ATP = 2 adenosylcob(III)yrinate a,c-diamide + 2 triphosphate + oxidized [electron-transfer flavoprotein] + 3 H(+). It catalyses the reaction 2 cob(II)alamin + reduced [electron-transfer flavoprotein] + 2 ATP = 2 adenosylcob(III)alamin + 2 triphosphate + oxidized [electron-transfer flavoprotein] + 3 H(+). It participates in cofactor biosynthesis; adenosylcobalamin biosynthesis; adenosylcobalamin from cob(II)yrinate a,c-diamide: step 2/7. This Citrobacter freundii protein is Corrinoid adenosyltransferase.